The chain runs to 160 residues: Triabin (160 aa).

Residues 1-18 (MKTIIAVTIFGILTCAYA) form the signal peptide. Cystine bridges form between C24-C128, C57-C160, and C87-C102.

This sequence belongs to the calycin superfamily. Triabin family. As to expression, expressed in salivary glands.

The protein resides in the secreted. In terms of biological role, thrombin inhibitor. Forms a non-covalent complex with thrombin at a molar ratio of 1:1. Inhibits thrombin-induced platelet aggregation. Prolongs thrombin clotting time and activated partial thromboplastin time. It only minimally suppresses the amidolytic activity of thrombin. Inhibits thrombin-mediated fibrin formation in the host. Inhibits thrombin-induced endothelium-dependent relaxant and contractile responses in host blood vessels. Inhibits thrombin-induced mitogenesis in host vascular smooth muscle cells. The protein is Triabin of Meccus pallidipennis (Triatomine bug).